The chain runs to 49 residues: Photosystem II reaction center protein K (49 aa).

Residues 1–12 (MISSIHLRKLLG) constitute a propeptide that is removed on maturation. A helical membrane pass occupies residues 24–44 (IIDVLPIIPVLFLLLAFVWQA).

This sequence belongs to the PsbK family. PSII is composed of 1 copy each of membrane proteins PsbA, PsbB, PsbC, PsbD, PsbE, PsbF, PsbH, PsbI, PsbJ, PsbK, PsbL, PsbM, PsbT, PsbX, PsbY, PsbZ, Psb30/Ycf12, at least 3 peripheral proteins of the oxygen-evolving complex and a large number of cofactors. It forms dimeric complexes.

The protein resides in the plastid. Its subcellular location is the chloroplast thylakoid membrane. One of the components of the core complex of photosystem II (PSII). PSII is a light-driven water:plastoquinone oxidoreductase that uses light energy to abstract electrons from H(2)O, generating O(2) and a proton gradient subsequently used for ATP formation. It consists of a core antenna complex that captures photons, and an electron transfer chain that converts photonic excitation into a charge separation. The chain is Photosystem II reaction center protein K from Phacus acuminatus.